Consider the following 306-residue polypeptide: 5'-hydroxyaverantin dehydrogenase (306 aa).

Serine 25, isoleucine 27, glutamine 48, lysine 52, and aspartate 73 together coordinate NADP(+). Residue serine 173 is the Proton donor of the active site. NADP(+)-binding residues include tyrosine 187, lysine 191, valine 220, and threonine 222. The Proton acceptor role is filled by tyrosine 187. Lysine 191 acts as the Lowers pKa of active site Tyr in catalysis.

It belongs to the short-chain dehydrogenases/reductases (SDR) family. As to quaternary structure, homodimer.

The protein resides in the cytoplasm. It localises to the cytosol. It carries out the reaction (1'S,5'S)-5'-hydroxyaverantin + NAD(+) = (S)-5'-oxoaverantin + NADH + H(+). The catalysed reaction is (1'S,5'R)-5'-hydroxyaverantin + NAD(+) = (S)-5'-oxoaverantin + NADH + 2 H(+). Its pathway is mycotoxin biosynthesis. In terms of biological role, 5'-hydroxyaverantin dehydrogenase; part of the fragmented gene cluster that mediates the biosynthesis of dothistromin (DOTH), a polyketide toxin very similar in structure to the aflatoxin precursor, versicolorin B. The first step of the pathway is the conversion of acetate to norsolorinic acid (NOR) and requires the fatty acid synthase subunits hexA and hexB, as well as the polyketide synthase pksA. PksA combines a hexanoyl starter unit and 7 malonyl-CoA extender units to synthesize the precursor NOR. The hexanoyl starter unit is provided to the acyl-carrier protein (ACP) domain by the fungal fatty acid synthase hexA/hexB. The second step is the conversion of NOR to averantin (AVN) and requires the norsolorinic acid ketoreductase nor1, which catalyzes the dehydration of norsolorinic acid to form (1'S)-averantin. The cytochrome P450 monooxygenase avnA then catalyzes the hydroxylation of AVN to 5'hydroxyaverantin (HAVN). The next step is performed by adhA that transforms HAVN to averufin (AVF). Averufin might then be converted to hydroxyversicolorone by cypX and avfA. Hydroxyversicolorone is further converted versiconal hemiacetal acetate (VHA) by moxY. VHA is then the substrate for the versiconal hemiacetal acetate esterase est1 to yield versiconal (VAL). Versicolorin B synthase vbsA then converts VAL to versicolorin B (VERB) by closing the bisfuran ring. Then, the activity of the versicolorin B desaturase verB leads to versicolorin A (VERA). DotB, a predicted chloroperoxidase, may perform epoxidation of the A-ring of VERA. Alternatively, a cytochrome P450, such as cypX or avnA could catalyze this step. It is also possible that another, uncharacterized, cytochrome P450 enzyme is responsible for this step. Opening of the epoxide could potentially be achieved by the epoxide hydrolase epoA. However, epoA seems not to be required for DOTH biosynthesis, but other epoxide hydrolases may have the ability to complement this hydrolysis. Alternatively, opening of the epoxide ring could be achieved non-enzymatically. The next step is the deoxygenation of ring A to yield the 5,8-dihydroxyanthraquinone which is most likely catalyzed by the NADPH dehydrogenase encoded by ver1. The last stages of DOTH biosynthesis are proposed to involve hydroxylation of the bisfuran. OrdB and norB might have oxidative roles here. An alternative possibility is that cytochrome P450 monoogenases such as avnA and cypX might perform these steps in addition to previously proposed steps. The polypeptide is 5'-hydroxyaverantin dehydrogenase (Dothistroma septosporum (strain NZE10 / CBS 128990) (Red band needle blight fungus)).